The following is a 214-amino-acid chain: Urease accessory protein UreG (214 aa).

23–30 (GPVGSGKT) lines the GTP pocket.

Belongs to the SIMIBI class G3E GTPase family. UreG subfamily. In terms of assembly, homodimer. UreD, UreF and UreG form a complex that acts as a GTP-hydrolysis-dependent molecular chaperone, activating the urease apoprotein by helping to assemble the nickel containing metallocenter of UreC. The UreE protein probably delivers the nickel.

The protein resides in the cytoplasm. In terms of biological role, facilitates the functional incorporation of the urease nickel metallocenter. This process requires GTP hydrolysis, probably effectuated by UreG. This chain is Urease accessory protein UreG, found in Bordetella pertussis (strain Tohama I / ATCC BAA-589 / NCTC 13251).